Here is a 355-residue protein sequence, read N- to C-terminus: Protein-glutamate methylesterase/protein-glutamine glutaminase (355 aa).

The 117-residue stretch at 7 to 123 (AAVVVDDSQF…SVGIKQQQDE (117 aa)) folds into the Response regulatory domain. 4-aspartylphosphate is present on aspartate 57. The segment at 139–159 (TEAAAERTTSTATSTTTSRSA) is disordered. The 195-residue stretch at 161 to 355 (EYVDKPTLVI…DGVLDTIMRE (195 aa)) folds into the CheB-type methylesterase domain. Catalysis depends on residues serine 173, histidine 200, and aspartate 297.

Belongs to the CheB family. Post-translationally, phosphorylated by CheA. Phosphorylation of the N-terminal regulatory domain activates the methylesterase activity.

The protein resides in the cytoplasm. It catalyses the reaction [protein]-L-glutamate 5-O-methyl ester + H2O = L-glutamyl-[protein] + methanol + H(+). It carries out the reaction L-glutaminyl-[protein] + H2O = L-glutamyl-[protein] + NH4(+). In terms of biological role, involved in chemotaxis. Part of a chemotaxis signal transduction system that modulates chemotaxis in response to various stimuli. Catalyzes the demethylation of specific methylglutamate residues introduced into the chemoreceptors (methyl-accepting chemotaxis proteins or MCP) by CheR. Also mediates the irreversible deamidation of specific glutamine residues to glutamic acid. The sequence is that of Protein-glutamate methylesterase/protein-glutamine glutaminase from Natronomonas pharaonis (strain ATCC 35678 / DSM 2160 / CIP 103997 / JCM 8858 / NBRC 14720 / NCIMB 2260 / Gabara) (Halobacterium pharaonis).